Here is a 105-residue protein sequence, read N- to C-terminus: UPF0060 membrane protein Reut_B3679 (105 aa).

4 helical membrane-spanning segments follow: residues 4 to 24 (IALY…PYLW), 28 to 48 (GASA…AWLL), 60 to 80 (AAYG…VDGV), and 82 to 102 (PSAW…IIVF).

Belongs to the UPF0060 family.

It is found in the cell inner membrane. This chain is UPF0060 membrane protein Reut_B3679, found in Cupriavidus pinatubonensis (strain JMP 134 / LMG 1197) (Cupriavidus necator (strain JMP 134)).